Reading from the N-terminus, the 500-residue chain is NF-kappa-B inhibitor cactus (500 aa).

Low complexity predominate over residues 1-43; the sequence is MPSPTKAAEAATKATATSDCSCSAASVEQRAPSNAANPSSSLA. Disordered regions lie at residues 1–148 and 171–212; these read MPSP…MRLK and LNNL…APPS. The residue at position 45 (S45) is a Phosphoserine; by PKC. A compositionally biased stretch (polar residues) spans 69 to 86; the sequence is NETSDSGFISGPQSSQIF. The span at 118–130 shows a compositional bias: acidic residues; it reads IIDEEEDQEEQEK. Phosphoserine; by PKC is present on S144. Residues 171 to 189 are compositionally biased toward polar residues; it reads LNNLGQSSSTQITGRSKVQ. T183 is modified (phosphothreonine; by PKC). The span at 190–212 shows a compositional bias: low complexity; the sequence is SSTASTANANPSGSGATSSAPPS. ANK repeat units lie at residues 229–261, 265–294, 298–327, 361–390, and 395–424; these read DGDT…LLNI, VAQT…EPTV, HGNT…ATEI, DGER…DINA, and SGRT…KLNL. Phosphothreonine; by PKC is present on residues T293 and T319. S395 carries the phosphoserine; by PKC modification.

This sequence belongs to the NF-kappa-B inhibitor family. In terms of assembly, phosphorylated isoform A binds to dorsal (dl); inhibits dl translocation to the nucleus and therefore from binding to DNA. In vitro, interacts with IKKbeta. Interacts with cactin and kappa-B-Ras. In terms of processing, activated IKKbeta phosphorylates cact. Expressed in ovary (at protein level).

The protein resides in the cytoplasm. Functionally, involved in the formation of the dorsoventral pattern. It inhibits nuclear translocation of the dorsal morphogen in the dorsal region of the embryo. Acts as a negative regulator of the NF-kappa-B (rel) signaling pathway. Cact is degraded by IKKbeta, this is essential for NF-kappa-B (rel) activation. This chain is NF-kappa-B inhibitor cactus (cact), found in Drosophila melanogaster (Fruit fly).